A 747-amino-acid polypeptide reads, in one-letter code: Cyclic di-GMP phosphodiesterase PdeF (747 aa).

The Periplasmic portion of the chain corresponds to 1 to 14 (MKLNATYIKIRDKW). A helical membrane pass occupies residues 15–36 (WGLPLFLPSLILPIFAHINTFA). Topologically, residues 37–42 (HISSGE) are cytoplasmic. Residues 43–65 (VFLFYLPLALMISMMMFFSWAAL) form a helical membrane-spanning segment. Residues 66–79 (PGIALGIFVRKYAE) are Periplasmic-facing. A helical transmembrane segment spans residues 80 to 102 (LGFYETLSLTANFIIIIILCWGG). Over 103 to 128 (YRVFTPRRNNVSHGDTRLISQRIFWQ) the chain is Cytoplasmic. Residues 129-151 (IVFPATLFLILFQFAAFVGLLAS) form a helical membrane-spanning segment. Residues 152 to 165 (RENLVGVMPFNLGT) lie on the Periplasmic side of the membrane. The helical transmembrane segment at 166-188 (LINYQALLVGNLIGVPLCYFIIR) threads the bilayer. At 189–215 (VVRNPFYLRSYYSQLKQQVDAKVTKKE) the chain is on the cytoplasmic side. A helical membrane pass occupies residues 216-235 (FALWLLALGALLLLLCMPLN). At 236–239 (EKST) the chain is on the periplasmic side. A helical transmembrane segment spans residues 240–259 (IFSTNYTLSLLLPLMMWGAM). Topologically, residues 260 to 265 (RYGYKL) are cytoplasmic. A helical transmembrane segment spans residues 266–285 (ISLLWAVVLMISIHSYQNYI). At 286–294 (PIYPGYTTQ) the chain is on the periplasmic side. The helical transmembrane segment at 295–317 (LTITSSSYLVFSFIVNYMAVLAT) threads the bilayer. Over 318-747 (RQRAVVRRIQ…NEIEPIRESA (430 aa)) the chain is Cytoplasmic. The EAL domain occupies 493-744 (KVAMMNRLQQ…DTLNEIEPIR (252 aa)).

Mg(2+) serves as cofactor. The cofactor is Mn(2+).

It localises to the cell inner membrane. The enzyme catalyses 3',3'-c-di-GMP + H2O = 5'-phosphoguanylyl(3'-&gt;5')guanosine + H(+). Its activity is regulated as follows. Inhibited by pGpG. Its function is as follows. Phosphodiesterase (PDE) that catalyzes the hydrolysis of cyclic-di-GMP (c-di-GMP) to 5'-pGpG. Truncated proteins consisting of the GGDEF/EAL domains (residues 319-747) or of the EAL domain alone (481-747) have c-di-GMP phosphodiesterase activity. They do not have diguanylate cyclase activity. Cyclic-di-GMP is a second messenger which controls cell surface-associated traits in bacteria. In Escherichia coli (strain K12), this protein is Cyclic di-GMP phosphodiesterase PdeF.